We begin with the raw amino-acid sequence, 127 residues long: Glycine cleavage system H protein (127 aa).

In terms of domain architecture, Lipoyl-binding spans 22-104; sequence EVVIGITHFA…YEGAWMVKVE (83 aa). At Lys-63 the chain carries N6-lipoyllysine.

The protein belongs to the GcvH family. In terms of assembly, the glycine cleavage system is composed of four proteins: P, T, L and H. Requires (R)-lipoate as cofactor.

Its function is as follows. The glycine cleavage system catalyzes the degradation of glycine. The H protein shuttles the methylamine group of glycine from the P protein to the T protein. Functionally, is also involved in protein lipoylation via its role as an octanoyl/lipoyl carrier protein intermediate. The sequence is that of Glycine cleavage system H protein from Bacillus cereus (strain ATCC 10987 / NRS 248).